The sequence spans 180 residues: Isopentenyl-diphosphate Delta-isomerase (180 aa).

Mn(2+)-binding residues include H26 and H32. The Nudix hydrolase domain occupies 30-168 (ALHLAFSVLL…PELFTAWFPQ (139 aa)). Residue C70 is part of the active site. Residue C70 coordinates Mg(2+). Residue H72 participates in Mn(2+) binding. E90 contacts Mg(2+). Residues E117 and E119 each contribute to the Mn(2+) site. E119 is an active-site residue.

It belongs to the IPP isomerase type 1 family. It depends on Mg(2+) as a cofactor. Mn(2+) serves as cofactor.

Its subcellular location is the cytoplasm. It catalyses the reaction isopentenyl diphosphate = dimethylallyl diphosphate. Its pathway is isoprenoid biosynthesis; dimethylallyl diphosphate biosynthesis; dimethylallyl diphosphate from isopentenyl diphosphate: step 1/1. Functionally, catalyzes the 1,3-allylic rearrangement of the homoallylic substrate isopentenyl (IPP) to its highly electrophilic allylic isomer, dimethylallyl diphosphate (DMAPP). This Photobacterium profundum (strain SS9) protein is Isopentenyl-diphosphate Delta-isomerase.